The sequence spans 327 residues: Methionyl-tRNA formyltransferase (327 aa).

Position 113–116 (113–116 (SILP)) interacts with (6S)-5,6,7,8-tetrahydrofolate.

The protein belongs to the Fmt family.

It carries out the reaction L-methionyl-tRNA(fMet) + (6R)-10-formyltetrahydrofolate = N-formyl-L-methionyl-tRNA(fMet) + (6S)-5,6,7,8-tetrahydrofolate + H(+). In terms of biological role, attaches a formyl group to the free amino group of methionyl-tRNA(fMet). The formyl group appears to play a dual role in the initiator identity of N-formylmethionyl-tRNA by promoting its recognition by IF2 and preventing the misappropriation of this tRNA by the elongation apparatus. The chain is Methionyl-tRNA formyltransferase from Colwellia psychrerythraea (strain 34H / ATCC BAA-681) (Vibrio psychroerythus).